The chain runs to 373 residues: MGSTANIQLATQSEDEERNCTYAMQLLSSSVLPFVLHSTIQLDVFDILAKDKAATKLSALEIVSHMPNCKNPDAATMLDRMLYVLASYSLLDCSVVEEGNGVTERRYGLSRVGKFFVRDEDGASMGPLLALLQDKVFINSWFELKDAVLEGGVPFDRVHGVHAFEYPKLDPKFNDVFNQAMINHTTVVMKRILENYKGFENLKTLVDVGGGLGVNLKMITSKYPTIKGTNFDLPHVVQHAPSYPGVDHVGGDMFESVPQGDAIFMKVMSKSLAEAWILHDWSDGHCLKLLKNCHKALPDNGKVIVVEANLPVKPDTDTTVVGVSQCDLIMMAQNPGGKERSEQEFRALASEAGFKGVNLICCVCNFWVMEFYK.

S-adenosyl-L-homocysteine-binding residues include glycine 209, aspartate 232, aspartate 252, methionine 253, methionine 265, and lysine 266. Residue aspartate 232 participates in S-adenosyl-L-methionine binding. Residue histidine 279 is the Proton acceptor of the active site.

Belongs to the class I-like SAM-binding methyltransferase superfamily. Cation-independent O-methyltransferase family. COMT subfamily.

The catalysed reaction is catechol + S-adenosyl-L-methionine = guaiacol + S-adenosyl-L-homocysteine + H(+). Functionally, O-methyltransferase that catalyzes the conversion of catechol to guaiacol. Involved in the production of guaiacol in fruits. The protein is Cathecol O-methyltransferase 1 of Solanum lycopersicum (Tomato).